We begin with the raw amino-acid sequence, 46 residues long: Esculentin-1SEb (46 aa).

Cys-40 and Cys-46 are disulfide-bonded.

Expressed by the skin glands.

It localises to the secreted. Mast cell degranulating peptide. Causes histamine release from rat peritoneal mast cells in vitro. Has antibacterial activity against the Gram-negative bacterium E.coli K12 and Gram-positive bacterium M.luteus NCT C2665. In Lithobates sevosus (Dusky gopher frog), this protein is Esculentin-1SEb.